The following is a 332-amino-acid chain: tRNA uridine(34) hydroxylase (332 aa).

Residues 123–217 (SDPEVLLVDT…YLEEVKQEES (95 aa)) enclose the Rhodanese domain. Residue Cys-177 is the Cysteine persulfide intermediate of the active site. The tract at residues 302–332 (SDVGAVIQSRRDNKENLKKSQVKLNNKKYNK) is disordered. The span at 310 to 319 (SRRDNKENLK) shows a compositional bias: basic and acidic residues.

This sequence belongs to the TrhO family.

The catalysed reaction is uridine(34) in tRNA + AH2 + O2 = 5-hydroxyuridine(34) in tRNA + A + H2O. Its function is as follows. Catalyzes oxygen-dependent 5-hydroxyuridine (ho5U) modification at position 34 in tRNAs. The polypeptide is tRNA uridine(34) hydroxylase (Shewanella woodyi (strain ATCC 51908 / MS32)).